Consider the following 102-residue polypeptide: Small ribosomal subunit protein uS10 (102 aa).

It belongs to the universal ribosomal protein uS10 family. Part of the 30S ribosomal subunit.

Functionally, involved in the binding of tRNA to the ribosomes. The protein is Small ribosomal subunit protein uS10 of Methylorubrum populi (strain ATCC BAA-705 / NCIMB 13946 / BJ001) (Methylobacterium populi).